A 162-amino-acid chain; its full sequence is tRNA (cytidine(34)-2'-O)-methyltransferase (162 aa).

S-adenosyl-L-methionine-binding residues include L83, G105, I127, and S135.

Belongs to the class IV-like SAM-binding methyltransferase superfamily. RNA methyltransferase TrmH family. TrmL subfamily. Homodimer.

The protein resides in the cytoplasm. It catalyses the reaction cytidine(34) in tRNA + S-adenosyl-L-methionine = 2'-O-methylcytidine(34) in tRNA + S-adenosyl-L-homocysteine + H(+). The catalysed reaction is 5-carboxymethylaminomethyluridine(34) in tRNA(Leu) + S-adenosyl-L-methionine = 5-carboxymethylaminomethyl-2'-O-methyluridine(34) in tRNA(Leu) + S-adenosyl-L-homocysteine + H(+). Methylates the ribose at the nucleotide 34 wobble position in the two leucyl isoacceptors tRNA(Leu)(CmAA) and tRNA(Leu)(cmnm5UmAA). Catalyzes the methyl transfer from S-adenosyl-L-methionine to the 2'-OH of the wobble nucleotide. The chain is tRNA (cytidine(34)-2'-O)-methyltransferase from Yersinia pestis.